The primary structure comprises 409 residues: Serine protease inhibitor 2 (409 aa).

An N-terminal signal peptide occupies residues 1–21 (MNKLNFVILCLAALLVFDATA). N-linked (GlcNAc...) asparagine glycans are attached at residues Asn-294 and Asn-324. The Hinge region; required for binding to peptidase signature appears at 356 to 360 (LGSEA).

The protein belongs to the serpin family. As to quaternary structure, forms a covalent heterodimer with protease CLIPB9; the interaction inhibits CLIPB9 protease activity. Forms a covalent heterodimer with protease CLIPB10; the interaction inhibits CLIPB10 catalytic activity. Interacts with CLIPB4 in the hemolymph of immune-challenged female mosquitoes; the interaction results in CLIPB4 inhibition. Post-translationally, protease CLIPB9 binds to SRPN2 via the hinge region resulting in the cleavage of the reactive bond. This leads to a conformational change in SRPN2 which traps CLIPB9 and distorts its active site, resulting in CLIPB9 inactivation.

The protein resides in the secreted. Its function is as follows. Serine protease inhibitor that functions in the melanization-mediated immune response. By preventing the activation of phenoloxidases through the inhibiting of serine proteases CLIPB9, CLIPB10 and CLIPB4, negatively regulates melanization in the hemolymph. By preventing melanization, has a detrimental role during P.berghei parasite mediated-infection and invasion of the mosquito midgut. The protein is Serine protease inhibitor 2 of Anopheles gambiae (African malaria mosquito).